We begin with the raw amino-acid sequence, 754 residues long: C2H2 finger domain transcription factor crzA (754 aa).

Disordered stretches follow at residues 1 to 51 (MASQ…TVTG), 63 to 150 (SFAN…FSDL), 187 to 227 (VHQQ…QGST), 269 to 299 (QGHRRAPSEVSEISSAAPSPYLSQHESFDGV), and 384 to 543 (GAEG…RVQK). The span at 30 to 44 (HQQQQQQQHQQHQGQ) shows a compositional bias: low complexity. 2 stretches are compositionally biased toward polar residues: residues 63-80 (SFANSSFDPNSNNVSPSA) and 94-114 (TPASQTDQNYANSLQIPQSYG). Residues 130 to 140 (QQQSQQQHHQQ) are compositionally biased toward low complexity. The span at 141-150 (PSLDDNFSDL) shows a compositional bias: polar residues. A compositionally biased stretch (low complexity) spans 189-209 (QQSHPTQIPSSHSSTSPQISP). Composition is skewed to polar residues over residues 210-227 (LEQQQHSSPGPMSTQGST) and 279-293 (SEISSAAPSPYLSQH). Composition is skewed to low complexity over residues 459–472 (STSRLRSSSTSSSL) and 491–515 (RQQQSNPSSRDPSPSRSNRRLSTSS). 2 consecutive C2H2-type zinc fingers follow at residues 548–570 (FQCNLCPKRFTRAYNLRSHLRTH) and 576–598 (FVCTVCGKAFARQHDRKRHEGLH). Residues 604–635 (FVCQGELSRGGQWGCGRRFARADALGRHFRSE) form a C2H2-type 3; degenerate zinc finger. Residues 708–737 (ADDPSDIGGRSSFDASSGNEFGFEDDDSGL) are disordered.

It is found in the nucleus. It localises to the cytoplasm. Transcription factor involved in the regulation of calcium ion homeostasis. Regulates genes encoding calcium transporters, transcription factors and genes that could be directly or indirectly involved in calcium metabolism. Supports especially pmcA, pmcB and pmcC expression encoding for calcium-translocating P-type ATPases. Binds target promoters at motif A[GT][CG]CA[AC][AG]. Plays an essential role germination, radial growth, and asexual development. Also plays a major role in proper chitin and glucan incorporation into the cell wall. Involved in the high-osmolarity glycerol response (HOG) signaling pathway. Required for pathogenicity in an experimental murine model of invasive pulmonary aspergillosis. The protein is C2H2 finger domain transcription factor crzA of Aspergillus fumigatus (strain ATCC MYA-4609 / CBS 101355 / FGSC A1100 / Af293) (Neosartorya fumigata).